The following is a 242-amino-acid chain: Spiralin (242 aa).

A signal peptide spans 1–23; sequence MKKLLSILAVFGVSAVGTTSVVA. A lipid anchor (N-palmitoyl cysteine) is attached at C24. The S-diacylglycerol cysteine moiety is linked to residue C24.

It belongs to the spiralin family. In terms of assembly, seems to occur as dimer, tetramers, and large oligomers of identical chains. Palmitate and stearate are the major lipid components.

Its subcellular location is the cell membrane. Major membrane protein of spiroplasma. This chain is Spiralin (spi), found in Spiroplasma melliferum.